A 217-amino-acid chain; its full sequence is ATP-dependent Clp protease proteolytic subunit (217 aa).

The Nucleophile role is filled by Ser121. His146 is a catalytic residue.

This sequence belongs to the peptidase S14 family. As to quaternary structure, fourteen ClpP subunits assemble into 2 heptameric rings which stack back to back to give a disk-like structure with a central cavity, resembling the structure of eukaryotic proteasomes.

Its subcellular location is the cytoplasm. It carries out the reaction Hydrolysis of proteins to small peptides in the presence of ATP and magnesium. alpha-casein is the usual test substrate. In the absence of ATP, only oligopeptides shorter than five residues are hydrolyzed (such as succinyl-Leu-Tyr-|-NHMec, and Leu-Tyr-Leu-|-Tyr-Trp, in which cleavage of the -Tyr-|-Leu- and -Tyr-|-Trp bonds also occurs).. Functionally, cleaves peptides in various proteins in a process that requires ATP hydrolysis. Has a chymotrypsin-like activity. Plays a major role in the degradation of misfolded proteins. The chain is ATP-dependent Clp protease proteolytic subunit from Burkholderia lata (strain ATCC 17760 / DSM 23089 / LMG 22485 / NCIMB 9086 / R18194 / 383).